The primary structure comprises 183 residues: MIDTVVARRYANAIFALGKKDGDDALSSRGECLAALGEALAAAPGLDMTLKSPVIGVEEKKAVLDKLLGKLKADQTMRSFCFLLADKERLAFLREISAWYGKLLDEAKGIVRGELVTAVKLSADKKAKLKESLEKKTGTALELTFAVDKDILGGMVLKMGDRVLDASLRAQLGILRETFKRGE.

The protein belongs to the ATPase delta chain family. F-type ATPases have 2 components, F(1) - the catalytic core - and F(0) - the membrane proton channel. F(1) has five subunits: alpha(3), beta(3), gamma(1), delta(1), epsilon(1). F(0) has three main subunits: a(1), b(2) and c(10-14). The alpha and beta chains form an alternating ring which encloses part of the gamma chain. F(1) is attached to F(0) by a central stalk formed by the gamma and epsilon chains, while a peripheral stalk is formed by the delta and b chains.

It is found in the cell inner membrane. Its function is as follows. F(1)F(0) ATP synthase produces ATP from ADP in the presence of a proton or sodium gradient. F-type ATPases consist of two structural domains, F(1) containing the extramembraneous catalytic core and F(0) containing the membrane proton channel, linked together by a central stalk and a peripheral stalk. During catalysis, ATP synthesis in the catalytic domain of F(1) is coupled via a rotary mechanism of the central stalk subunits to proton translocation. In terms of biological role, this protein is part of the stalk that links CF(0) to CF(1). It either transmits conformational changes from CF(0) to CF(1) or is implicated in proton conduction. This chain is ATP synthase subunit delta, found in Desulfovibrio desulfuricans (strain ATCC 27774 / DSM 6949 / MB).